The chain runs to 511 residues: AMP phosphorylase (511 aa).

AMP-binding positions include glycine 168, 194 to 199 (SRAITS), and threonine 203. Aspartate 256 acts as the Proton donor in catalysis. Serine 262 and lysine 286 together coordinate AMP.

The protein belongs to the thymidine/pyrimidine-nucleoside phosphorylase family. Type 2 subfamily.

It carries out the reaction AMP + phosphate = alpha-D-ribose 1,5-bisphosphate + adenine. It catalyses the reaction CMP + phosphate = cytosine + alpha-D-ribose 1,5-bisphosphate. The catalysed reaction is UMP + phosphate = alpha-D-ribose 1,5-bisphosphate + uracil. Functionally, catalyzes the conversion of AMP and phosphate to adenine and ribose 1,5-bisphosphate (R15P). Exhibits phosphorylase activity toward CMP and UMP in addition to AMP. Functions in an archaeal AMP degradation pathway, together with R15P isomerase and RubisCO. This Thermofilum pendens (strain DSM 2475 / Hrk 5) protein is AMP phosphorylase.